A 315-amino-acid chain; its full sequence is Acetyl-coenzyme A carboxylase carboxyl transferase subunit alpha (315 aa).

Positions 32 to 289 (EIDMLEASLE…KEAFTKQLSE (258 aa)) constitute a CoA carboxyltransferase C-terminal domain.

Belongs to the AccA family. Acetyl-CoA carboxylase is a heterohexamer composed of biotin carboxyl carrier protein (AccB), biotin carboxylase (AccC) and two subunits each of ACCase subunit alpha (AccA) and ACCase subunit beta (AccD).

It is found in the cytoplasm. The catalysed reaction is N(6)-carboxybiotinyl-L-lysyl-[protein] + acetyl-CoA = N(6)-biotinyl-L-lysyl-[protein] + malonyl-CoA. It participates in lipid metabolism; malonyl-CoA biosynthesis; malonyl-CoA from acetyl-CoA: step 1/1. Its function is as follows. Component of the acetyl coenzyme A carboxylase (ACC) complex. First, biotin carboxylase catalyzes the carboxylation of biotin on its carrier protein (BCCP) and then the CO(2) group is transferred by the carboxyltransferase to acetyl-CoA to form malonyl-CoA. The polypeptide is Acetyl-coenzyme A carboxylase carboxyl transferase subunit alpha (Staphylococcus carnosus (strain TM300)).